We begin with the raw amino-acid sequence, 665 residues long: E3 ubiquitin-protein ligase cblA (665 aa).

Residues 30 to 50 (NNNNNINNNNNNNNINSNNNG) are disordered. The segment at 109–231 (TSLVNYIHYE…NNENNNNNNN (123 aa)) is 4H. Residues 109 to 400 (TSLVNYIHYE…PDIFKSILSF (292 aa)) enclose the Cbl-PTB domain. The interval 232–306 (NYNPYELLSN…FKLSVFIKWF (75 aa)) is EF-hand-like. Asp-287, Thr-289, Asp-291, and Tyr-293 together coordinate Ca(2+). Positions 307–400 (GALPVSLGIF…PDIFKSILSF (94 aa)) are SH2-like. Disordered stretches follow at residues 437 to 456 (ENNNNQNNNQNNNNNNINTF) and 467 to 609 (DSSN…NNNN). A compositionally biased stretch (low complexity) spans 467–478 (DSSNSSDTNKSP). The stretch at 479–544 (TKSRKSSFKN…NNNNNNNNNN (66 aa)) forms a coiled coil. The span at 486–512 (FKNDKDKKEKEKEKGKDKEKEKERVSD) shows a compositional bias: basic and acidic residues. Low complexity-rich tracts occupy residues 530–561 (NNNNNNNNNNNNNNNNNNNNNNNNNNSSNNNN) and 571–609 (TSNGSSGNNNNNNNNNNNNNNNNNNNNSSSTTKRNNNNN). The RING-type zinc finger occupies 618–653 (CTVCMDNEINTVFLECGHLSCCSLCSVKLKKCPICR).

Ubiquitinated.

The protein localises to the cytoplasm. The protein resides in the nucleus. It carries out the reaction S-ubiquitinyl-[E2 ubiquitin-conjugating enzyme]-L-cysteine + [acceptor protein]-L-lysine = [E2 ubiquitin-conjugating enzyme]-L-cysteine + N(6)-ubiquitinyl-[acceptor protein]-L-lysine.. It functions in the pathway protein modification; protein ubiquitination. Its function is as follows. Acts as an E3 ubiquitin-protein ligase, which accepts ubiquitin from specific E2 ubiquitin-conjugating enzymes, and then transfers it to substrates promoting their degradation by the proteasome. Up-regulates STATc tyrosine phosphorylation via an inhibitory effect on ptpC accumulation. Recognizes activated receptor tyrosine kinases, RTKs and terminates signaling. In Dictyostelium discoideum (Social amoeba), this protein is E3 ubiquitin-protein ligase cblA (cblA-1).